A 490-amino-acid chain; its full sequence is Glutamyl-tRNA(Gln) amidotransferase subunit A (490 aa).

Active-site charge relay system residues include Lys77 and Ser152. Residue Ser176 is the Acyl-ester intermediate of the active site.

Belongs to the amidase family. GatA subfamily. In terms of assembly, heterotrimer of A, B and C subunits.

The catalysed reaction is L-glutamyl-tRNA(Gln) + L-glutamine + ATP + H2O = L-glutaminyl-tRNA(Gln) + L-glutamate + ADP + phosphate + H(+). Allows the formation of correctly charged Gln-tRNA(Gln) through the transamidation of misacylated Glu-tRNA(Gln) in organisms which lack glutaminyl-tRNA synthetase. The reaction takes place in the presence of glutamine and ATP through an activated gamma-phospho-Glu-tRNA(Gln). The polypeptide is Glutamyl-tRNA(Gln) amidotransferase subunit A (Limosilactobacillus reuteri (strain DSM 20016) (Lactobacillus reuteri)).